Reading from the N-terminus, the 172-residue chain is Large ribosomal subunit protein uL10 (172 aa).

This sequence belongs to the universal ribosomal protein uL10 family. Part of the ribosomal stalk of the 50S ribosomal subunit. The N-terminus interacts with L11 and the large rRNA to form the base of the stalk. The C-terminus forms an elongated spine to which L12 dimers bind in a sequential fashion forming a multimeric L10(L12)X complex.

Its function is as follows. Forms part of the ribosomal stalk, playing a central role in the interaction of the ribosome with GTP-bound translation factors. In Caulobacter vibrioides (strain ATCC 19089 / CIP 103742 / CB 15) (Caulobacter crescentus), this protein is Large ribosomal subunit protein uL10 (rplJ).